Consider the following 713-residue polypeptide: Phosphoribosylformylglycinamidine synthase subunit PurL (713 aa).

Histidine 32 is an active-site residue. An ATP-binding site is contributed by tyrosine 35. Glutamate 76 contacts Mg(2+). Substrate is bound by residues 77 to 80 (SHNH) and arginine 99. The active-site Proton acceptor is histidine 78. Residue aspartate 100 participates in Mg(2+) binding. Glutamine 224 is a binding site for substrate. Aspartate 252 lines the Mg(2+) pocket. Residue 296–298 (ESQ) coordinates substrate. Residues aspartate 471 and glycine 508 each coordinate ATP. Asparagine 509 contacts Mg(2+). Position 511 (serine 511) interacts with substrate.

This sequence belongs to the FGAMS family. In terms of assembly, monomer. Part of the FGAM synthase complex composed of 1 PurL, 1 PurQ and 2 PurS subunits.

Its subcellular location is the cytoplasm. It carries out the reaction N(2)-formyl-N(1)-(5-phospho-beta-D-ribosyl)glycinamide + L-glutamine + ATP + H2O = 2-formamido-N(1)-(5-O-phospho-beta-D-ribosyl)acetamidine + L-glutamate + ADP + phosphate + H(+). The protein operates within purine metabolism; IMP biosynthesis via de novo pathway; 5-amino-1-(5-phospho-D-ribosyl)imidazole from N(2)-formyl-N(1)-(5-phospho-D-ribosyl)glycinamide: step 1/2. Functionally, part of the phosphoribosylformylglycinamidine synthase complex involved in the purines biosynthetic pathway. Catalyzes the ATP-dependent conversion of formylglycinamide ribonucleotide (FGAR) and glutamine to yield formylglycinamidine ribonucleotide (FGAM) and glutamate. The FGAM synthase complex is composed of three subunits. PurQ produces an ammonia molecule by converting glutamine to glutamate. PurL transfers the ammonia molecule to FGAR to form FGAM in an ATP-dependent manner. PurS interacts with PurQ and PurL and is thought to assist in the transfer of the ammonia molecule from PurQ to PurL. This Thermococcus kodakarensis (strain ATCC BAA-918 / JCM 12380 / KOD1) (Pyrococcus kodakaraensis (strain KOD1)) protein is Phosphoribosylformylglycinamidine synthase subunit PurL.